Consider the following 363-residue polypeptide: LIM and cysteine-rich domains protein 1 (363 aa).

S16 bears the Phosphoserine mark. A PET domain is found at M99 to G206. Residues A200–G233 form a disordered region. The span at P208–G220 shows a compositional bias: basic and acidic residues. 2 consecutive LIM zinc-binding domains span residues Y239 to P304 and R305 to T363.

As to quaternary structure, interacts with beta-dystroglycan. Interacts with GATA1, GATA4 and GATA6. Highly expressed in both skeletal muscle and cardiac muscle.

It is found in the cytoplasm. It localises to the nucleus. Transcriptional cofactor that restricts GATA6 function by inhibiting DNA-binding, resulting in repression of GATA6 transcriptional activation of downstream target genes. Represses GATA6-mediated trans activation of lung- and cardiac tissue-specific promoters. Inhibits DNA-binding by GATA4 and GATA1 to the cTNC promoter. Plays a critical role in the development of cardiac hypertrophy via activation of calcineurin/nuclear factor of activated T-cells signaling pathway. The sequence is that of LIM and cysteine-rich domains protein 1 (LMCD1) from Sus scrofa (Pig).